The following is a 253-amino-acid chain: Phycoerythrobilin:ferredoxin oxidoreductase (253 aa).

This sequence belongs to the HY2 family.

The catalysed reaction is (3Z)-phycoerythrobilin + oxidized 2[4Fe-4S]-[ferredoxin] = 15,16-dihydrobiliverdin + reduced 2[4Fe-4S]-[ferredoxin] + 2 H(+). Functionally, catalyzes the two-electron reduction of the C2 and C3(1) diene system of 15,16-dihydrobiliverdin. The polypeptide is Phycoerythrobilin:ferredoxin oxidoreductase (Prochlorococcus marinus (strain MIT 9301)).